The chain runs to 502 residues: Sporulation-specific protein 2 (502 aa).

Residues 1-56 (MPIWKTQTFFTSISVIQIVNKETKVSTKKEKDSMLNQLNTILRFLFLFLQLIKSSA) form the signal peptide. 7 N-linked (GlcNAc...) asparagine glycosylation sites follow: Asn-77, Asn-135, Asn-285, Asn-303, Asn-340, Asn-343, and Asn-355. Residues 441–474 (EGNVLGKQETDNDNGKKEKGKNGAKSQGSSKKME) are disordered. Over residues 448-461 (QETDNDNGKKEKGK) the composition is skewed to basic and acidic residues. Asn-475 carries GPI-anchor amidated asparagine lipidation. The propeptide at 476–502 (SAPKNIFIDAFKMSVYAVFTVLFSIIF) is removed in mature form.

It belongs to the SPS2 family.

It localises to the cell membrane. Its function is as follows. Involved in middle stages of meiosis. Redundant with SPS22 for the organization of the beta-glucan layer of the spore wall. The chain is Sporulation-specific protein 2 (SPS2) from Saccharomyces cerevisiae (strain ATCC 204508 / S288c) (Baker's yeast).